The sequence spans 133 residues: UPF0225 protein BP2036 (133 aa).

This sequence belongs to the UPF0225 family.

This is UPF0225 protein BP2036 from Bordetella pertussis (strain Tohama I / ATCC BAA-589 / NCTC 13251).